The sequence spans 425 residues: D-arabinitol transporter (425 aa).

Over 1–7 the chain is Cytoplasmic; it reads MSINNKQ. The chain crosses the membrane as a helical span at residues 8 to 28; sequence WLGLPLNLLWGYIAIAVFMTG. The Extracellular portion of the chain corresponds to 29 to 51; sequence DGFELAFLSHYIKALGFSPAEAS. A helical transmembrane segment spans residues 52-72; that stretch reads FAFTLYGLAAALSAWISGVVA. Topologically, residues 73–80 are cytoplasmic; that stretch reads EIITPLKT. Residues 81–101 traverse the membrane as a helical segment; it reads MMIGFVLWCVFHVLFLVFGLG. Residues 102-107 are Extracellular-facing; that stretch reads HANYAL. A helical membrane pass occupies residues 108-128; it reads ILLFYGIRGFAYPLFLYSFIV. Over 129–141 the chain is Cytoplasmic; the sequence is AIVHNVKSDNASS. A helical transmembrane segment spans residues 142-162; that stretch reads AIGWFWAVYSIGIGVFGSYIP. The Extracellular portion of the chain corresponds to 163–172; the sequence is SFTIPHIGEM. A helical transmembrane segment spans residues 173–193; sequence GTLWLALAFCLTGGVIALVSL. Residues 194-237 are Cytoplasmic-facing; sequence RHIQTPQHMQNLTTREKFSELGRAATLLYTNRNILLSSMVRIIN. A helical membrane pass occupies residues 238–258; sequence TLSLFGFAVIMPMMFVDELGF. Residues 259-263 are Extracellular-facing; that stretch reads STSEW. A helical membrane pass occupies residues 264–284; the sequence is LQVWAVFFFTTIFSNVLWGIL. Residues 285 to 295 are Cytoplasmic-facing; sequence GEKLGWMKVVR. A helical membrane pass occupies residues 296–316; sequence WFGCIGMALSSLAFYYIPQHF. Over 317–323 the chain is Extracellular; it reads GHSFAMA. The chain crosses the membrane as a helical span at residues 324–344; it reads LIPAIALGIFVAAFVPLAAVF. The Cytoplasmic segment spans residues 345 to 360; it reads PALEPKHKGAAISVYN. Residues 361-381 traverse the membrane as a helical segment; sequence LSAGMSNFLAPAIAVVLLPFF. The Extracellular segment spans residues 382 to 383; sequence ST. Residues 384–404 form a helical membrane-spanning segment; that stretch reads IGVVIAYTALYVVAFFLCAFI. At 405–425 the chain is on the cytoplasmic side; that stretch reads RVEQPGFSHKEATAREQVEFS.

Belongs to the major facilitator superfamily. Sugar transporter (TC 2.A.1.1) family. CsbX subfamily.

It is found in the cell membrane. The protein is D-arabinitol transporter (dalT) of Klebsiella pneumoniae.